The primary structure comprises 60 residues: Ixodegrin-like peptide (60 aa).

The signal sequence occupies residues 1-19; it reads MNAVFIAALLILGTSTFDA. The Cell attachment site motif lies at 49 to 51; that stretch reads RGD.

Belongs to the ixodegrin family. Contains 3 disulfide bonds. As to expression, expressed in salivary glands.

The protein resides in the secreted. Tick salivary platelet aggregation inhibitor that plays an important part in the anti-hemostatic strategy of ticks. Inhibits platelet aggregation induced by ADP, thrombin and thromboxane A2 (TXA2). Blocks platelet adhesion to soluble collagen (most probably through the binding to alpha-2/beta-1 integrin (ITGA2/ITGB1)) and binds to purified glycoprotein IIb/IIIa (ITGA2B/ITGB3) in a dose-dependent manner. In vivo, reduces thrombus weight effectively in a rat arteriovenous shunt model and inhibits thrombosis in a carrageenan-induced mouse tail thrombosis model. The sequence is that of Ixodegrin-like peptide from Ixodes scapularis (Black-legged tick).